The primary structure comprises 132 residues: Fatty acid-binding protein, intestinal (132 aa).

Residue alanine 2 is modified to N-acetylalanine. Positions 83 and 107 each coordinate hexadecanoate. Tetradecanoate contacts are provided by tryptophan 83 and arginine 107.

This sequence belongs to the calycin superfamily. Fatty-acid binding protein (FABP) family. In terms of tissue distribution, expressed in the small intestine. Highest expression levels in the proximal ileum.

Its subcellular location is the cytoplasm. In terms of biological role, FABPs are thought to play a role in the intracellular transport of long-chain fatty acids and their acyl-CoA esters. FABP2 is probably involved in triglyceride-rich lipoprotein synthesis. Binds saturated long-chain fatty acids with a high affinity, but binds with a lower affinity to unsaturated long-chain fatty acids. FABP2 may also help maintain energy homeostasis by functioning as a lipid sensor. This is Fatty acid-binding protein, intestinal (Fabp2) from Mus musculus (Mouse).